The following is a 464-amino-acid chain: Protein FAM90A5 (464 aa).

3 disordered regions span residues 16–42, 70–389, and 415–437; these read RAQT…DPRL, PATL…HDGA, and HSPE…SEAP. Composition is skewed to basic and acidic residues over residues 74-89 and 97-114; these read GKKE…KPRV and NKDK…DPQR. Over residues 180 to 197 the composition is skewed to low complexity; sequence LASLSPLRKASLSSSSSL.

Belongs to the FAM90 family.

The sequence is that of Protein FAM90A5 from Homo sapiens (Human).